Consider the following 423-residue polypeptide: Histidine--tRNA ligase (423 aa).

Belongs to the class-II aminoacyl-tRNA synthetase family. In terms of assembly, homodimer.

The protein resides in the cytoplasm. It carries out the reaction tRNA(His) + L-histidine + ATP = L-histidyl-tRNA(His) + AMP + diphosphate + H(+). The protein is Histidine--tRNA ligase of Moorella thermoacetica (strain ATCC 39073 / JCM 9320).